Reading from the N-terminus, the 810-residue chain is Valine--tRNA ligase (810 aa).

A 'HIGH' region motif is present at residues 45 to 55 (PTISGQLHIGH). A 'KMSKS' region motif is present at residues 534 to 538 (KMSKS). K537 contacts ATP.

It belongs to the class-I aminoacyl-tRNA synthetase family. ValS type 2 subfamily. Monomer.

The protein resides in the cytoplasm. It catalyses the reaction tRNA(Val) + L-valine + ATP = L-valyl-tRNA(Val) + AMP + diphosphate. Functionally, catalyzes the attachment of valine to tRNA(Val). As ValRS can inadvertently accommodate and process structurally similar amino acids such as threonine, to avoid such errors, it has a 'posttransfer' editing activity that hydrolyzes mischarged Thr-tRNA(Val) in a tRNA-dependent manner. In Ehrlichia ruminantium (strain Welgevonden), this protein is Valine--tRNA ligase.